A 130-amino-acid chain; its full sequence is Small ribosomal subunit protein uS9 (130 aa).

The protein belongs to the universal ribosomal protein uS9 family.

In Methylococcus capsulatus (strain ATCC 33009 / NCIMB 11132 / Bath), this protein is Small ribosomal subunit protein uS9.